Reading from the N-terminus, the 433-residue chain is Peptidoglycan glycosyltransferase RodA (433 aa).

12 consecutive transmembrane segments (helical) span residues 9–29 (FDYL…LFIY), 44–64 (YLKQ…VSMY), 74–94 (TLIF…GRYV), 100–120 (WIGV…AYIL), 158–178 (LGTA…AGFP), 181–201 (LIFA…LPLW), 221–241 (LSLF…VGYL), 249–269 (YWIT…LLGV), 295–315 (WHII…MGYL), 341–361 (WGFV…LHTL), 378–398 (GVLG…MGIM), and 400–420 (ITGI…TAMI).

Belongs to the SEDS family. MrdB/RodA subfamily.

It is found in the cell inner membrane. It carries out the reaction [GlcNAc-(1-&gt;4)-Mur2Ac(oyl-L-Ala-gamma-D-Glu-L-Lys-D-Ala-D-Ala)](n)-di-trans,octa-cis-undecaprenyl diphosphate + beta-D-GlcNAc-(1-&gt;4)-Mur2Ac(oyl-L-Ala-gamma-D-Glu-L-Lys-D-Ala-D-Ala)-di-trans,octa-cis-undecaprenyl diphosphate = [GlcNAc-(1-&gt;4)-Mur2Ac(oyl-L-Ala-gamma-D-Glu-L-Lys-D-Ala-D-Ala)](n+1)-di-trans,octa-cis-undecaprenyl diphosphate + di-trans,octa-cis-undecaprenyl diphosphate + H(+). It functions in the pathway cell wall biogenesis; peptidoglycan biosynthesis. In terms of biological role, peptidoglycan polymerase that is essential for cell wall elongation. The sequence is that of Peptidoglycan glycosyltransferase RodA from Treponema pallidum (strain Nichols).